The sequence spans 69 residues: Large ribosomal subunit protein uL29 (69 aa).

The protein belongs to the universal ribosomal protein uL29 family.

The protein is Large ribosomal subunit protein uL29 of Staphylococcus saprophyticus subsp. saprophyticus (strain ATCC 15305 / DSM 20229 / NCIMB 8711 / NCTC 7292 / S-41).